A 383-amino-acid chain; its full sequence is MIKPHGGKLVNRIVEGAKREELIKKAGEMPRIMLNRDELTAVDNIATGLFSPLEGFLTSEDYNRVVEEMRLADGTVWSIPEVLGVTREEADNLKEGQDVGLYFEEDDELYAILHLEEKYTCDPEREAELVYGTTEEEHPGVKNVYKRDEILLGGKISLINRLKYDDFNNYRLTPAETREKIKEKGWQTVVGFQTRNPIHRAHEYLQKCALETVDGLFLSPLVGRTKASDIPADIRIKSYEVVLDKFYPRDRTMMVVFPAAMHYAGPREAIFHALCRKNYGCTHFIVGRDHAGVGDYYGTYDAQKIFDEFDPEEIGITPLKFEYSFYCKKCGGMASGKTCPHSADDHIFLSGTRVRKLLREGKKPPKEMTRPEVAEVLIQGMQQ.

This sequence belongs to the sulfate adenylyltransferase family.

The enzyme catalyses sulfate + ATP + H(+) = adenosine 5'-phosphosulfate + diphosphate. The protein operates within sulfur metabolism; hydrogen sulfide biosynthesis; sulfite from sulfate: step 1/3. This Halothermothrix orenii (strain H 168 / OCM 544 / DSM 9562) protein is Sulfate adenylyltransferase.